The sequence spans 137 residues: Ubiquitin-conjugating enzyme variant MMS2 (137 aa).

One can recognise a UBC core domain in the interval 5 to 137; it reads PRNFRLLEEL…LRQPKEGETF (133 aa). Serine 71 is subject to Phosphoserine.

It belongs to the ubiquitin-conjugating enzyme family. As to quaternary structure, heterodimer with UBC13.

Its function is as follows. Has a role in the DNA error-free postreplication repair (PRR) pathway. Lacks catalytic activity by itself. The UBC13/MMS2 heterodimer catalyzes the synthesis of non-canonical poly-ubiquitin chains that are linked through 'Lys-63'. This is Ubiquitin-conjugating enzyme variant MMS2 (MMS2) from Saccharomyces cerevisiae (strain ATCC 204508 / S288c) (Baker's yeast).